The following is a 273-amino-acid chain: Type II pantothenate kinase (273 aa).

Position 8–15 (8–15) interacts with ATP; the sequence is DAGGTLTK. The active-site Proton acceptor is Glu76. Residues Thr105, 127–131, Phe143, and Ser230 each bind ATP; that span reads GGTIM.

This sequence belongs to the type II pantothenate kinase family. Homodimer.

The protein localises to the cytoplasm. The catalysed reaction is (R)-pantothenate + ATP = (R)-4'-phosphopantothenate + ADP + H(+). It functions in the pathway cofactor biosynthesis; coenzyme A biosynthesis; CoA from (R)-pantothenate: step 1/5. In terms of biological role, catalyzes the phosphorylation of pantothenate (Pan), the first step in CoA biosynthesis. This Bacillus cereus (strain G9842) protein is Type II pantothenate kinase.